A 237-amino-acid polypeptide reads, in one-letter code: Urease subunit alpha (237 aa).

Positions 1–102 (MKLTPKELDK…LVTIHTPVED (102 aa)) are urease gamma. A urease beta region spans residues 103 to 237 (NGKLAPGEVF…CGCEATKDKQ (135 aa)).

It in the N-terminal section; belongs to the urease gamma subunit family. In the C-terminal section; belongs to the urease beta subunit family. Heterohexamer of 3 UreA (alpha) and 3 UreB (beta) subunits.

It localises to the cytoplasm. It catalyses the reaction urea + 2 H2O + H(+) = hydrogencarbonate + 2 NH4(+). It functions in the pathway nitrogen metabolism; urea degradation; CO(2) and NH(3) from urea (urease route): step 1/1. The chain is Urease subunit alpha from Helicobacter felis.